The chain runs to 103 residues: Small ribosomal subunit protein uS10 (103 aa).

Belongs to the universal ribosomal protein uS10 family. As to quaternary structure, part of the 30S ribosomal subunit.

Its function is as follows. Involved in the binding of tRNA to the ribosomes. This chain is Small ribosomal subunit protein uS10, found in Xanthomonas axonopodis pv. citri (strain 306).